The sequence spans 475 residues: Ribulose bisphosphate carboxylase large chain (475 aa).

Lys14 carries the N6,N6,N6-trimethyllysine modification. The substrate site is built by Asn123 and Thr173. The Proton acceptor role is filled by Lys175. Substrate is bound at residue Lys177. 3 residues coordinate Mg(2+): Lys201, Asp203, and Glu204. Lys201 bears the N6-carboxylysine mark. Catalysis depends on His294, which acts as the Proton acceptor. Substrate-binding residues include Arg295, His327, and Ser379.

The protein belongs to the RuBisCO large chain family. Type I subfamily. In terms of assembly, heterohexadecamer of 8 large chains and 8 small chains; disulfide-linked. The disulfide link is formed within the large subunit homodimers. It depends on Mg(2+) as a cofactor. Post-translationally, the disulfide bond which can form in the large chain dimeric partners within the hexadecamer appears to be associated with oxidative stress and protein turnover.

It localises to the plastid. The protein localises to the chloroplast. The enzyme catalyses 2 (2R)-3-phosphoglycerate + 2 H(+) = D-ribulose 1,5-bisphosphate + CO2 + H2O. The catalysed reaction is D-ribulose 1,5-bisphosphate + O2 = 2-phosphoglycolate + (2R)-3-phosphoglycerate + 2 H(+). In terms of biological role, ruBisCO catalyzes two reactions: the carboxylation of D-ribulose 1,5-bisphosphate, the primary event in carbon dioxide fixation, as well as the oxidative fragmentation of the pentose substrate in the photorespiration process. Both reactions occur simultaneously and in competition at the same active site. This is Ribulose bisphosphate carboxylase large chain from Actinidia chinensis (Kiwi).